The sequence spans 120 residues: Large ribosomal subunit protein P3y (120 aa).

Positions 81–92 (GGAAAGGGGGGE) are enriched in gly residues. The disordered stretch occupies residues 81–120 (GGAAAGGGGGGEAAAATKEEEKKKEESEEEEGDFGFDLFG). The segment covering 97–106 (TKEEEKKKEE) has biased composition (basic and acidic residues).

The protein belongs to the eukaryotic ribosomal protein P1/P2 family.

In terms of biological role, plays an important role in the elongation step of protein synthesis. The chain is Large ribosomal subunit protein P3y (RPP3B) from Arabidopsis thaliana (Mouse-ear cress).